A 140-amino-acid chain; its full sequence is Nucleoside diphosphate kinase (140 aa).

Positions 11, 59, 87, 93, 104, and 114 each coordinate ATP. The active-site Pros-phosphohistidine intermediate is H117.

This sequence belongs to the NDK family. As to quaternary structure, homotetramer. The cofactor is Mg(2+).

It localises to the cytoplasm. The enzyme catalyses a 2'-deoxyribonucleoside 5'-diphosphate + ATP = a 2'-deoxyribonucleoside 5'-triphosphate + ADP. It catalyses the reaction a ribonucleoside 5'-diphosphate + ATP = a ribonucleoside 5'-triphosphate + ADP. In terms of biological role, major role in the synthesis of nucleoside triphosphates other than ATP. The ATP gamma phosphate is transferred to the NDP beta phosphate via a ping-pong mechanism, using a phosphorylated active-site intermediate. This is Nucleoside diphosphate kinase from Roseobacter denitrificans (strain ATCC 33942 / OCh 114) (Erythrobacter sp. (strain OCh 114)).